The primary structure comprises 406 residues: Outer membrane protein assembly factor BamB (406 aa).

Positions 1-23 (MMKQVDMYKRVALIALMGMSLAG) are cleaved as a signal peptide. Residue C24 is the site of N-palmitoyl cysteine attachment. C24 carries the S-diacylglycerol cysteine lipid modification.

Belongs to the BamB family. Part of the Bam complex.

The protein resides in the cell outer membrane. In terms of biological role, part of the outer membrane protein assembly complex, which is involved in assembly and insertion of beta-barrel proteins into the outer membrane. The polypeptide is Outer membrane protein assembly factor BamB (Xanthomonas campestris pv. campestris (strain ATCC 33913 / DSM 3586 / NCPPB 528 / LMG 568 / P 25)).